Reading from the N-terminus, the 398-residue chain is Argininosuccinate synthase (398 aa).

8–16 (AYSGGLDTT) is a binding site for ATP. L-citrulline is bound at residue Tyr87. An ATP-binding site is contributed by Gly117. L-aspartate is bound by residues Thr119, Asn123, and Asp124. Asn123 contributes to the L-citrulline binding site. L-citrulline is bound by residues Arg127, Ser175, Glu259, and Tyr271.

It belongs to the argininosuccinate synthase family. Type 1 subfamily. In terms of assembly, homotetramer.

It is found in the cytoplasm. It carries out the reaction L-citrulline + L-aspartate + ATP = 2-(N(omega)-L-arginino)succinate + AMP + diphosphate + H(+). It functions in the pathway amino-acid biosynthesis; L-arginine biosynthesis; L-arginine from L-ornithine and carbamoyl phosphate: step 2/3. This chain is Argininosuccinate synthase, found in Corynebacterium jeikeium (strain K411).